Reading from the N-terminus, the 543-residue chain is Cyclohexanone 1,2-monooxygenase (543 aa).

Residues Phe16, Asp37, Trp46, Asp57, Tyr63, and Val110 each coordinate FAD.

This sequence belongs to the FAD-binding monooxygenase family. Requires FAD as cofactor.

The catalysed reaction is cyclohexanone + NADPH + O2 + H(+) = hexano-6-lactone + NADP(+) + H2O. This Acinetobacter sp protein is Cyclohexanone 1,2-monooxygenase.